The primary structure comprises 287 residues: Shikimate dehydrogenase (NADP(+)) (287 aa).

Shikimate is bound by residues 21–23 (SKS) and Thr-68. Lys-72 functions as the Proton acceptor in the catalytic mechanism. Positions 93 and 109 each coordinate shikimate. NADP(+)-binding positions include 133-137 (GAGGA), 157-162 (NRTQTK), and Met-226. Tyr-228 is a shikimate binding site. Residue Gly-250 coordinates NADP(+).

The protein belongs to the shikimate dehydrogenase family. In terms of assembly, homodimer.

It catalyses the reaction shikimate + NADP(+) = 3-dehydroshikimate + NADPH + H(+). It functions in the pathway metabolic intermediate biosynthesis; chorismate biosynthesis; chorismate from D-erythrose 4-phosphate and phosphoenolpyruvate: step 4/7. Its function is as follows. Involved in the biosynthesis of the chorismate, which leads to the biosynthesis of aromatic amino acids. Catalyzes the reversible NADPH linked reduction of 3-dehydroshikimate (DHSA) to yield shikimate (SA). This chain is Shikimate dehydrogenase (NADP(+)), found in Shewanella oneidensis (strain ATCC 700550 / JCM 31522 / CIP 106686 / LMG 19005 / NCIMB 14063 / MR-1).